The following is a 389-amino-acid chain: Alkanesulfonate monooxygenase (389 aa).

The protein belongs to the SsuD family.

The catalysed reaction is an alkanesulfonate + FMNH2 + O2 = an aldehyde + FMN + sulfite + H2O + 2 H(+). Its function is as follows. Catalyzes the desulfonation of aliphatic sulfonates. The protein is Alkanesulfonate monooxygenase of Variovorax paradoxus (strain S110).